The following is a 430-amino-acid chain: Tol-Pal system protein TolB (430 aa).

Residues 1 to 21 (MKQAFRVALGFLILWASVLHA) form the signal peptide.

This sequence belongs to the TolB family. The Tol-Pal system is composed of five core proteins: the inner membrane proteins TolA, TolQ and TolR, the periplasmic protein TolB and the outer membrane protein Pal. They form a network linking the inner and outer membranes and the peptidoglycan layer.

It is found in the periplasm. Functionally, part of the Tol-Pal system, which plays a role in outer membrane invagination during cell division and is important for maintaining outer membrane integrity. TolB occupies a key intermediary position in the Tol-Pal system because it communicates directly with both membrane-embedded components, Pal in the outer membrane and TolA in the inner membrane. The protein is Tol-Pal system protein TolB of Serratia proteamaculans (strain 568).